We begin with the raw amino-acid sequence, 259 residues long: Protein unc-50 homolog (259 aa).

The residue at position 1 (Met-1) is an N-acetylmethionine. Polar residues predominate over residues 1 to 17 (MLPSTSVNSPAQGNGVL). The disordered stretch occupies residues 1-22 (MLPSTSVNSPAQGNGVLSSRDA). Residues 1–82 (MLPSTSVNSP…TKDQWARDDP (82 aa)) are Cytoplasmic-facing. Ser-6 is modified (phosphoserine). A helical transmembrane segment spans residues 83 to 103 (AFLVLLSIWLCVSTIGFGFVL). Topologically, residues 104 to 115 (DMGFFETIKLLL) are lumenal. Residues 116–136 (WVVFIDCVGVGLLISTLMWFI) form a helical membrane-spanning segment. The Cytoplasmic portion of the chain corresponds to 137–163 (SNKYLVKRQSRDYDVEWGYAFDVHLNA). The helical transmembrane segment at 164 to 184 (FYPLLVILHFIQLFFINHVIL) threads the bilayer. Topologically, residues 185 to 187 (TDT) are lumenal. The chain crosses the membrane as a helical span at residues 188-208 (FIGYLVGNTLWLVAVGYYIYV). Residues 209–222 (TFLGYSALPFLKNT) are Cytoplasmic-facing. The chain crosses the membrane as a helical span at residues 223-243 (VILLYPFAPLILLYGLSLALG). Over 244–259 (WNFTHTLCSFYKYRVK) the chain is Lumenal.

The protein belongs to the unc-50 family.

The protein resides in the nucleus inner membrane. The protein localises to the golgi apparatus membrane. Involved in the cell surface expression of neuronal nicotinic receptors. Binds RNA. The polypeptide is Protein unc-50 homolog (UNC50) (Bos taurus (Bovine)).